The following is a 101-amino-acid chain: Protein Tat (101 aa).

The segment at 1 to 24 (MDPVDPNLEPWNHPGSQPKTPCNK) is interaction with human CREBBP. Positions 1-48 (MDPVDPNLEPWNHPGSQPKTPCNKCFCKVCCWHCQVCFLNKGLGISYG) are transactivation. The Zn(2+) site is built by cysteine 22, cysteine 25, and cysteine 27. The tract at residues 22–37 (CNKCFCKVCCWHCQVC) is cysteine-rich. N6-acetyllysine; by host PCAF is present on lysine 28. Zn(2+) contacts are provided by cysteine 30, histidine 33, cysteine 34, and cysteine 37. Positions 38–48 (FLNKGLGISYG) are core. Residues 48-57 (GRKKRKHRRG) are compositionally biased toward basic residues. The segment at 48 to 101 (GRKKRKHRRGTPQSSKGHQDPVPKQPLPTTRGNPTGPKESKKEVASKAEADQCD) is disordered. The Nuclear localization signal, RNA-binding (TAR), and protein transduction motif lies at 49-57 (RKKRKHRRG). The segment at 49 to 86 (RKKRKHRRGTPQSSKGHQDPVPKQPLPTTRGNPTGPKE) is interaction with the host capping enzyme RNGTT. 2 positions are modified to N6-acetyllysine; by host EP300 and GCN5L2: lysine 50 and lysine 51. The residue at position 52 (arginine 52) is an Asymmetric dimethylarginine; by host PRMT6. Residue lysine 71 forms a Glycyl lysine isopeptide (Lys-Gly) (interchain with G-Cter in ubiquitin) linkage. The span at 85 to 101 (KESKKEVASKAEADQCD) shows a compositional bias: basic and acidic residues.

It belongs to the lentiviruses Tat family. In terms of assembly, interacts with host CCNT1. Associates with the P-TEFb complex composed at least of Tat, P-TEFb (CDK9 and CCNT1), TAR RNA, RNA Pol II. Recruits the HATs CREBBP, TAF1/TFIID, EP300, PCAF and GCN5L2. Interacts with host KAT5/Tip60; this interaction targets the latter to degradation. Interacts with the host deacetylase SIRT1. Interacts with host capping enzyme RNGTT; this interaction stimulates RNGTT. Binds to host KDR, and to the host integrins ITGAV/ITGB3 and ITGA5/ITGB1. Interacts with host KPNB1/importin beta-1 without previous binding to KPNA1/importin alpha-1. Interacts with EIF2AK2. Interacts with host nucleosome assembly protein NAP1L1; this interaction may be required for the transport of Tat within the nucleus, since the two proteins interact at the nuclear rim. Interacts with host C1QBP/SF2P32; this interaction involves lysine-acetylated Tat. Interacts with the host chemokine receptors CCR2, CCR3 and CXCR4. Interacts with host DPP4/CD26; this interaction may trigger an anti-proliferative effect. Interacts with host LDLR. Interacts with the host extracellular matrix metalloproteinase MMP1. Interacts with host PRMT6; this interaction mediates Tat's methylation. Interacts with, and is ubiquitinated by MDM2/Hdm2. Interacts with host PSMC3 and HTATIP2. Interacts with STAB1; this interaction may overcome SATB1-mediated repression of IL2 and IL2RA (interleukin) in T cells by binding to the same domain than HDAC1. Interacts (when acetylated) with human CDK13, thereby increasing HIV-1 mRNA splicing and promoting the production of the doubly spliced HIV-1 protein Nef. Interacts with host TBP; this interaction modulates the activity of transcriptional pre-initiation complex. Interacts with host RELA. Interacts with host PLSCR1; this interaction negatively regulates Tat transactivation activity by altering its subcellular distribution. Asymmetrical arginine methylation by host PRMT6 seems to diminish the transactivation capacity of Tat and affects the interaction with host CCNT1. In terms of processing, acetylation by EP300, CREBBP, GCN5L2/GCN5 and PCAF regulates the transactivation activity of Tat. EP300-mediated acetylation of Lys-50 promotes dissociation of Tat from the TAR RNA through the competitive binding to PCAF's bromodomain. In addition, the non-acetylated Tat's N-terminus can also interact with PCAF. PCAF-mediated acetylation of Lys-28 enhances Tat's binding to CCNT1. Lys-50 is deacetylated by SIRT1. Post-translationally, polyubiquitination by host MDM2 does not target Tat to degradation, but activates its transactivation function and fosters interaction with CCNT1 and TAR RNA. Phosphorylated by EIF2AK2 on serine and threonine residues adjacent to the basic region important for TAR RNA binding and function. Phosphorylation of Tat by EIF2AK2 is dependent on the prior activation of EIF2AK2 by dsRNA.

It localises to the host nucleus. The protein resides in the host nucleolus. Its subcellular location is the host cytoplasm. It is found in the secreted. Transcriptional activator that increases RNA Pol II processivity, thereby increasing the level of full-length viral transcripts. Recognizes a hairpin structure at the 5'-LTR of the nascent viral mRNAs referred to as the transactivation responsive RNA element (TAR) and recruits the cyclin T1-CDK9 complex (P-TEFb complex) that will in turn hyperphosphorylate the RNA polymerase II to allow efficient elongation. The CDK9 component of P-TEFb and other Tat-activated kinases hyperphosphorylate the C-terminus of RNA Pol II that becomes stabilized and much more processive. Other factors such as HTATSF1/Tat-SF1, SUPT5H/SPT5, and HTATIP2 are also important for Tat's function. Besides its effect on RNA Pol II processivity, Tat induces chromatin remodeling of proviral genes by recruiting the histone acetyltransferases (HATs) CREBBP, EP300 and PCAF to the chromatin. This also contributes to the increase in proviral transcription rate, especially when the provirus integrates in transcriptionally silent region of the host genome. To ensure maximal activation of the LTR, Tat mediates nuclear translocation of NF-kappa-B by interacting with host RELA. Through its interaction with host TBP, Tat may also modulate transcription initiation. Tat can reactivate a latently infected cell by penetrating in it and transactivating its LTR promoter. In the cytoplasm, Tat is thought to act as a translational activator of HIV-1 mRNAs. In terms of biological role, extracellular circulating Tat can be endocytosed by surrounding uninfected cells via the binding to several surface receptors such as CD26, CXCR4, heparan sulfate proteoglycans (HSPG) or LDLR. Neurons are rarely infected, but they internalize Tat via their LDLR. Through its interaction with nuclear HATs, Tat is potentially able to control the acetylation-dependent cellular gene expression. Modulates the expression of many cellular genes involved in cell survival, proliferation or in coding for cytokines or cytokine receptors. Tat plays a role in T-cell and neurons apoptosis. Tat induced neurotoxicity and apoptosis probably contribute to neuroAIDS. Circulating Tat also acts as a chemokine-like and/or growth factor-like molecule that binds to specific receptors on the surface of the cells, affecting many cellular pathways. In the vascular system, Tat binds to ITGAV/ITGB3 and ITGA5/ITGB1 integrins dimers at the surface of endothelial cells and competes with bFGF for heparin-binding sites, leading to an excess of soluble bFGF. In Homo sapiens (Human), this protein is Protein Tat.